The primary structure comprises 464 residues: Putative protein TIC 214 C-terminal part (464 aa).

This sequence belongs to the TIC214 family. In terms of assembly, part of the Tic complex.

The protein localises to the plastid. It is found in the chloroplast. Functionally, involved in protein precursor import into chloroplasts. May be part of an intermediate translocation complex acting as a protein-conducting channel at the inner envelope. The chain is Putative protein TIC 214 C-terminal part from Marchantia polymorpha (Common liverwort).